Reading from the N-terminus, the 707-residue chain is Leukotoxin export ATP-binding protein LtxB (707 aa).

The Peptidase C39 domain maps to 4–125 (QKNTNLALQA…ERYQSKVILI (122 aa)). Histidine 83 is a catalytic residue. The next 5 helical transmembrane spans lie at 158–178 (LIVS…FQVV), 191–211 (LNVI…LGGL), 269–289 (ALTS…MWYY), 295–315 (LVVL…SPIL), and 387–407 (AVMV…DLSI). In terms of domain architecture, ABC transmembrane type-1 spans 158-436 (LIVSIFLQIF…LAQIWQDFQQ (279 aa)). The 236-residue stretch at 468 to 703 (ISFRNIKFRY…EKGLYSYLHQ (236 aa)) folds into the ABC transporter domain. Position 502 to 509 (502 to 509 (GRSGSGKS)) interacts with ATP.

This sequence belongs to the ABC transporter superfamily. Protein-1 exporter (TC 3.A.1.109) family. Probably part of a complex composed of LtxB, LtxD and TdeA, which forms a single transport channel across the two membranes.

The protein resides in the cell inner membrane. The enzyme catalyses ATP + H2O + proteinSide 1 = ADP + phosphate + proteinSide 2.. Functionally, involved in the export of the LtxA leukotoxin. The polypeptide is Leukotoxin export ATP-binding protein LtxB (Aggregatibacter actinomycetemcomitans (Actinobacillus actinomycetemcomitans)).